The primary structure comprises 786 residues: Kazrin-A (786 aa).

A disordered region spans residues 44-70 (EEPGEPQEHQQQQQQQNHQDAPVQRQK). Residues 52-62 (HQQQQQQQNHQ) are compositionally biased toward low complexity. Residues 92 to 270 (LLHEEVLRLQ…SLATLTKDVP (179 aa)) are a coiled coil. A disordered region spans residues 350–425 (MSDASVMEGE…LFDDSDSLSS (76 aa)). 3 consecutive SAM domains span residues 457 to 522 (WRAG…YRDA), 535 to 599 (DHHW…LHTL), and 623 to 686 (WTCQ…SEEM). Residues 703 to 760 (PLGTPPTLHRQSSLSSSSPSCHDDQQSLRRVKQQLGLSPKNLTARNISHQSRSGSFPR) form a disordered region. Positions 742–758 (KNLTARNISHQSRSGSF) are enriched in polar residues.

It belongs to the kazrin family.

This chain is Kazrin-A (kazna), found in Danio rerio (Zebrafish).